We begin with the raw amino-acid sequence, 397 residues long: MNVIRFSDLCAQGQVSGKRVFIRADLNVPQDDAGHITEDTRIRASIPCIQMALDAGAAVMVTSHLGRPTEGAFKPEDSLAPVAQRLAELMGRAVPLIANWVDGVSVQPGQLVLLENCRVNPGEKKNNEALARKMAALCDIFVHDAFGTAHRAEASTYGIAQFAKVACAGPLLAAEMDAISKALANPKRPLVAIVAGSKVSTKLTILKSLASKVDQLIVGGGIANTFMLAAGLKIGKSLAEPDLLEDARAVIAAMKARGAAVPIPTDVVTAKTFAADAVATVKAATDVADDDLILDIGPQTAAALATQLKAAGTIVWNGPVGVFEFPAFENGTQTIAHAIAESSAFSIAGGGDTLAAIAKYGIEKQIGYISTGGGAFLEVLEGKTLPAFEILTRRAAG.

Substrate is bound by residues 25–27, R41, 64–67, R118, and R151; these read DLN and HLGR. ATP contacts are provided by residues K202, E324, and 350 to 353; that span reads GGDT.

Belongs to the phosphoglycerate kinase family. As to quaternary structure, monomer.

Its subcellular location is the cytoplasm. The catalysed reaction is (2R)-3-phosphoglycerate + ATP = (2R)-3-phospho-glyceroyl phosphate + ADP. The protein operates within carbohydrate degradation; glycolysis; pyruvate from D-glyceraldehyde 3-phosphate: step 2/5. This chain is Phosphoglycerate kinase, found in Albidiferax ferrireducens (strain ATCC BAA-621 / DSM 15236 / T118) (Rhodoferax ferrireducens).